The primary structure comprises 351 residues: D-alanine--D-alanine ligase (351 aa).

The region spanning 135–343 (NQIFLQSGQK…MEEVFSDLIE (209 aa)) is the ATP-grasp domain. 167–222 (LETLGFPQFLKPVEGGSSVSVYKITNREQLKEKLALIFESDSKVMSQSFLTGIEVS) lines the ATP pocket. The Mg(2+) site is built by Asp298, Glu310, and Asn312.

This sequence belongs to the D-alanine--D-alanine ligase family. It depends on Mg(2+) as a cofactor. Requires Mn(2+) as cofactor.

It localises to the cytoplasm. It carries out the reaction 2 D-alanine + ATP = D-alanyl-D-alanine + ADP + phosphate + H(+). Its pathway is cell wall biogenesis; peptidoglycan biosynthesis. Cell wall formation. This Leptospira interrogans serogroup Icterohaemorrhagiae serovar copenhageni (strain Fiocruz L1-130) protein is D-alanine--D-alanine ligase.